A 362-amino-acid chain; its full sequence is 3-dehydroquinate synthase (362 aa).

NAD(+) is bound by residues 71-76, 105-109, 129-130, Lys142, Lys151, and 169-172; these read DGEQYK, GVIGD, TT, and CLKT. Residues Glu184, His247, and His264 each contribute to the Zn(2+) site.

The protein belongs to the sugar phosphate cyclases superfamily. Dehydroquinate synthase family. It depends on Co(2+) as a cofactor. Zn(2+) serves as cofactor. The cofactor is NAD(+).

It is found in the cytoplasm. It catalyses the reaction 7-phospho-2-dehydro-3-deoxy-D-arabino-heptonate = 3-dehydroquinate + phosphate. The protein operates within metabolic intermediate biosynthesis; chorismate biosynthesis; chorismate from D-erythrose 4-phosphate and phosphoenolpyruvate: step 2/7. Functionally, catalyzes the conversion of 3-deoxy-D-arabino-heptulosonate 7-phosphate (DAHP) to dehydroquinate (DHQ). The sequence is that of 3-dehydroquinate synthase from Salmonella enteritidis PT4 (strain P125109).